A 1273-amino-acid polypeptide reads, in one-letter code: Cullin-associated NEDD8-dissociated protein 2 (1273 aa).

S2 is subject to N-acetylserine. HEAT repeat units lie at residues 2-36, 37-74, 82-119, 121-157, 167-205, 209-246, 248-284, 292-329, 364-405, 409-446, 469-506, 554-591, 602-641, 685-722, 727-764, 768-807, 809-850, 894-931, 933-968, 970-1003, 1004-1040, 1044-1081, 1085-1121, 1142-1178, 1194-1231, and 1241-1273; these read STGA…LDPL, PWLQ…ELQK, DSER…KVKE, QVEN…ELPP, SVCR…RLGA, TFHA…ACST, LFVE…SVGR, AHLD…KCPK, TEDS…SRPD, DFHC…HTRP, AQVP…VLPG, PHLP…TLWP, PYVG…HLGD, PILA…SQGL, PAVR…TQPA, EVSG…TRPP, VEYS…ALSA, GPQR…GNLP, FLPF…DNLK, YVED…LVFV, NPPF…DQPH, PLLK…NKPS, DLLD…DDGL, LDIC…LCPA, TCTA…NPEV, and STQI…MELS. The segment at 352 to 383 is disordered; it reads YNHDSDEEEQMETEDSEFSEQESEDEYSDDDD. The segment covering 356-383 has biased composition (acidic residues); it reads SDEEEQMETEDSEFSEQESEDEYSDDDD.

Belongs to the CAND family. As to quaternary structure, binds TBP, CNOT3 and UBE3C. Post-translationally, ubiquitinated and targeted for proteasomal degradation. In terms of tissue distribution, detected in heart and skeletal muscle.

Its subcellular location is the nucleus. In terms of biological role, probable assembly factor of SCF (SKP1-CUL1-F-box protein) E3 ubiquitin ligase complexes that promotes the exchange of the substrate-recognition F-box subunit in SCF complexes, thereby playing a key role in the cellular repertoire of SCF complexes. In Rattus norvegicus (Rat), this protein is Cullin-associated NEDD8-dissociated protein 2 (Cand2).